The primary structure comprises 1063 residues: Alkane uptake protein B (1063 aa).

The N-terminal stretch at 1-17 is a signal peptide; sequence MKYNKTLALIPAILLAA. A lipid anchor (N-palmitoyl cysteine) is attached at Cys-18. Residue Cys-18 is the site of S-diacylglycerol cysteine attachment.

In terms of assembly, interacts with the outer membrane protein AupA.

It is found in the cell inner membrane. Functionally, required for growth on alkanes. Probably involved in the uptake of micelle-solubilized alkanes. May facilitate the transfer of alkanes from the outer membrane to the inner membrane. The protein is Alkane uptake protein B of Marinobacter nauticus (strain ATCC 49840 / DSM 8798 / CIP 103578 / SP17) (Marinobacter hydrocarbonoclasticus).